The sequence spans 70 residues: SPbeta prophage-derived uncharacterized protein YorZ (70 aa).

This chain is SPbeta prophage-derived uncharacterized protein YorZ (yorZ), found in Bacillus subtilis (strain 168).